The primary structure comprises 374 residues: Speckle-type POZ protein (374 aa).

The region spanning 31–161 (KFSYMWTINN…DDKLTLFCEV (131 aa)) is the MATH domain. Positions 71–191 (VNPKGLDEES…PECRLADELG (121 aa)) are required for nuclear localization. The interval 123–133 (YRFVQGKDWGF) is important for binding substrate proteins. The BTB domain occupies 173-297 (QNTMNMVKVP…MCEDALCSNL (125 aa)). Important for homodimerization stretches follow at residues 186 to 217 (LADE…HKAI) and 297 to 355 (LSVE…AYRS).

This sequence belongs to the Tdpoz family. As to quaternary structure, interacts with GLI2 and GLI3. Homodimer and homooligomer. Heterodimer with SPOPL. Each dimer interacts with two CUL3 molecules. Part of cullin-RING-based BCR (BTB-CUL3-RBX1) E3 ubiquitin-protein ligase complexes that contain CUL3 and homodimeric SPOP, or the heterodimer formed by SPOP and SPOPL, plus a target protein, such as MACROH2A1, PDX1/IPF1, BMI1, BRMS1 and DAXX. Interacts with IRF1; this interaction mediates IRF1 proteasomal degradation. Interacts with HNF1A.

It is found in the nucleus. The protein resides in the nucleus speckle. It participates in protein modification; protein ubiquitination. Its function is as follows. Component of a cullin-RING-based BCR (BTB-CUL3-RBX1) E3 ubiquitin-protein ligase complex that mediates the ubiquitination of target proteins, leading most often to their proteasomal degradation. In complex with CUL3, involved in ubiquitination and proteasomal degradation of BRMS1, DAXX, PDX1/IPF1, GLI2 and GLI3. In complex with CUL3, involved in ubiquitination of MACROH2A1 and BMI1; this does not lead to their proteasomal degradation. Inhibits transcriptional activation of PDX1/IPF1 targets, such as insulin, by promoting PDX1/IPF1 degradation. The cullin-RING-based BCR (BTB-CUL3-RBX1) E3 ubiquitin-protein ligase complex containing homodimeric SPOP has higher ubiquitin ligase activity than the complex that contains the heterodimer formed by SPOP and SPOPL. Involved in the regulation of bromodomain and extra-terminal motif (BET) proteins BRD2, BRD3, BRD4 stability.Plays an essential role for proper translation, but not for their degradation, of critical DNA replication licensing factors CDT1 and CDC6, thereby participating in DNA synthesis and cell proliferation. Regulates interferon regulatory factor 1/IRF1 proteasomal turnover by targeting S/T-rich degrons in IRF1. Involved in ubiquitination of BRDT and promotes its degradation, thereby regulates histone removal in early condensing spermatids prior to histone-to-protamine exchange. This chain is Speckle-type POZ protein (SPOP), found in Bos taurus (Bovine).